The sequence spans 501 residues: Putative antiporter subunit mnhD2 (501 aa).

A run of 14 helical transmembrane segments spans residues 4-24 (SNLL…LVFI), 33-53 (IFSI…LIYV), 79-99 (LSLL…AYGF), 109-129 (YYLP…FLTA), 131-151 (LFNI…LITL), 162-182 (IIYV…VGLL), 207-227 (IVIV…LVLF), 245-265 (FAAL…TLIF), 274-294 (PLLV…VLAY), 309-329 (IGFI…GAIF), 334-354 (DIVV…ITGL), 369-389 (FFGV…PFSG), 409-429 (LALM…IFFV), and 452-472 (NLIG…PLLF).

It belongs to the CPA3 antiporters (TC 2.A.63) subunit D family. As to quaternary structure, may form a heterooligomeric complex that consists of seven subunits: mnhA2, mnhB2, mnhC2, mnhD2, mnhE2, mnhF2 and mnhG2.

The protein localises to the cell membrane. The protein is Putative antiporter subunit mnhD2 (mnhD2) of Staphylococcus saprophyticus subsp. saprophyticus (strain ATCC 15305 / DSM 20229 / NCIMB 8711 / NCTC 7292 / S-41).